The chain runs to 160 residues: N-acetyltransferase Pat (160 aa).

The N-acetyltransferase domain occupies 5 to 148 (IKIRKATKED…VYGEMRLTER (144 aa)). Positions 79, 81, 87, 89, 91, 92, 118, 123, and 127 each coordinate CoA.

It belongs to the acetyltransferase family. GNAT subfamily.

It catalyses the reaction L-lysyl-[protein] + acetyl-CoA = N(6)-acetyl-L-lysyl-[protein] + CoA + H(+). Its function is as follows. Modulates activity of albA1, the major archaeal DNA compaction protein, by decreasing albA1's nucleic acid binding affinity through acetylation of 'Lys-16'. This is N-acetyltransferase Pat from Saccharolobus solfataricus (strain ATCC 35092 / DSM 1617 / JCM 11322 / P2) (Sulfolobus solfataricus).